Reading from the N-terminus, the 456-residue chain is Probable polygalacturonase At3g15720 (456 aa).

A signal peptide spans 1-23; that stretch reads MKKKTWFLNFSLFFLQIFTSSNA. PbH1 repeat units follow at residues 169 to 195, 196 to 217, 219 to 239, 249 to 270, 278 to 299, and 314 to 341; these read CNYV…DVGA, SSNV…AINS, TSNI…SIGS, VENV…RIKT, ARMI…IIDQ, and SSAV…DFRC. The active-site Proton donor is Asp210. His233 is a catalytic residue.

Belongs to the glycosyl hydrolase 28 family.

It is found in the secreted. The protein localises to the cell wall. The enzyme catalyses (1,4-alpha-D-galacturonosyl)n+m + H2O = (1,4-alpha-D-galacturonosyl)n + (1,4-alpha-D-galacturonosyl)m.. The chain is Probable polygalacturonase At3g15720 from Arabidopsis thaliana (Mouse-ear cress).